We begin with the raw amino-acid sequence, 122 residues long: Ribonuclease P protein component (122 aa).

The protein belongs to the RnpA family. In terms of assembly, consists of a catalytic RNA component (M1 or rnpB) and a protein subunit.

It catalyses the reaction Endonucleolytic cleavage of RNA, removing 5'-extranucleotides from tRNA precursor.. In terms of biological role, RNaseP catalyzes the removal of the 5'-leader sequence from pre-tRNA to produce the mature 5'-terminus. It can also cleave other RNA substrates such as 4.5S RNA. The protein component plays an auxiliary but essential role in vivo by binding to the 5'-leader sequence and broadening the substrate specificity of the ribozyme. This is Ribonuclease P protein component from Roseiflexus castenholzii (strain DSM 13941 / HLO8).